Here is a 206-residue protein sequence, read N- to C-terminus: Small ribosomal subunit protein uS4 (206 aa).

Positions 96 to 156 (TRLDNVVYRM…EKSRTQARIK (61 aa)) constitute an S4 RNA-binding domain.

It belongs to the universal ribosomal protein uS4 family. In terms of assembly, part of the 30S ribosomal subunit. Contacts protein S5. The interaction surface between S4 and S5 is involved in control of translational fidelity.

In terms of biological role, one of the primary rRNA binding proteins, it binds directly to 16S rRNA where it nucleates assembly of the body of the 30S subunit. Functionally, with S5 and S12 plays an important role in translational accuracy. The protein is Small ribosomal subunit protein uS4 of Shewanella sp. (strain MR-4).